A 191-amino-acid polypeptide reads, in one-letter code: Fe/S biogenesis protein NfuA (191 aa).

Residues C149 and C152 each contribute to the [4Fe-4S] cluster site.

The protein belongs to the NfuA family. Homodimer. The cofactor is [4Fe-4S] cluster.

Involved in iron-sulfur cluster biogenesis. Binds a 4Fe-4S cluster, can transfer this cluster to apoproteins, and thereby intervenes in the maturation of Fe/S proteins. Could also act as a scaffold/chaperone for damaged Fe/S proteins. The polypeptide is Fe/S biogenesis protein NfuA (Pectobacterium atrosepticum (strain SCRI 1043 / ATCC BAA-672) (Erwinia carotovora subsp. atroseptica)).